The chain runs to 62 residues: Large ribosomal subunit protein uL29 (62 aa).

The protein belongs to the universal ribosomal protein uL29 family.

This Trichlorobacter lovleyi (strain ATCC BAA-1151 / DSM 17278 / SZ) (Geobacter lovleyi) protein is Large ribosomal subunit protein uL29.